Here is a 346-residue protein sequence, read N- to C-terminus: Holliday junction branch migration complex subunit RuvB (346 aa).

Positions 1–182 (MSERLVTSNE…LGVLCSMEYY (182 aa)) are large ATPase domain (RuvB-L). ATP-binding positions include L21, R22, G63, K66, T67, T68, 129-131 (EDY), R172, Y182, and R219. T67 provides a ligand contact to Mg(2+). The tract at residues 183 to 253 (TDEQLKEIII…AAKKSLEILE (71 aa)) is small ATPAse domain (RuvB-S). The interval 256-346 (GEGFDRIDNK…DSKQCTLFEK (91 aa)) is head domain (RuvB-H). 2 residues coordinate DNA: R311 and R316.

It belongs to the RuvB family. Homohexamer. Forms an RuvA(8)-RuvB(12)-Holliday junction (HJ) complex. HJ DNA is sandwiched between 2 RuvA tetramers; dsDNA enters through RuvA and exits via RuvB. An RuvB hexamer assembles on each DNA strand where it exits the tetramer. Each RuvB hexamer is contacted by two RuvA subunits (via domain III) on 2 adjacent RuvB subunits; this complex drives branch migration. In the full resolvosome a probable DNA-RuvA(4)-RuvB(12)-RuvC(2) complex forms which resolves the HJ.

It is found in the cytoplasm. It carries out the reaction ATP + H2O = ADP + phosphate + H(+). In terms of biological role, the RuvA-RuvB-RuvC complex processes Holliday junction (HJ) DNA during genetic recombination and DNA repair, while the RuvA-RuvB complex plays an important role in the rescue of blocked DNA replication forks via replication fork reversal (RFR). RuvA specifically binds to HJ cruciform DNA, conferring on it an open structure. The RuvB hexamer acts as an ATP-dependent pump, pulling dsDNA into and through the RuvAB complex. RuvB forms 2 homohexamers on either side of HJ DNA bound by 1 or 2 RuvA tetramers; 4 subunits per hexamer contact DNA at a time. Coordinated motions by a converter formed by DNA-disengaged RuvB subunits stimulates ATP hydrolysis and nucleotide exchange. Immobilization of the converter enables RuvB to convert the ATP-contained energy into a lever motion, pulling 2 nucleotides of DNA out of the RuvA tetramer per ATP hydrolyzed, thus driving DNA branch migration. The RuvB motors rotate together with the DNA substrate, which together with the progressing nucleotide cycle form the mechanistic basis for DNA recombination by continuous HJ branch migration. Branch migration allows RuvC to scan DNA until it finds its consensus sequence, where it cleaves and resolves cruciform DNA. The polypeptide is Holliday junction branch migration complex subunit RuvB (Clostridium perfringens (strain 13 / Type A)).